The sequence spans 321 residues: Ribose-phosphate pyrophosphokinase (321 aa).

ATP-binding positions include 44 to 46 (DGE) and 103 to 104 (RQ). Residues H137 and D179 each contribute to the Mg(2+) site. K202 is an active-site residue. Residues R204, D228, and 232–236 (DTAGT) contribute to the D-ribose 5-phosphate site.

This sequence belongs to the ribose-phosphate pyrophosphokinase family. Class I subfamily. Homohexamer. Mg(2+) serves as cofactor.

The protein localises to the cytoplasm. It carries out the reaction D-ribose 5-phosphate + ATP = 5-phospho-alpha-D-ribose 1-diphosphate + AMP + H(+). It participates in metabolic intermediate biosynthesis; 5-phospho-alpha-D-ribose 1-diphosphate biosynthesis; 5-phospho-alpha-D-ribose 1-diphosphate from D-ribose 5-phosphate (route I): step 1/1. Functionally, involved in the biosynthesis of the central metabolite phospho-alpha-D-ribosyl-1-pyrophosphate (PRPP) via the transfer of pyrophosphoryl group from ATP to 1-hydroxyl of ribose-5-phosphate (Rib-5-P). This chain is Ribose-phosphate pyrophosphokinase, found in Staphylococcus aureus (strain COL).